The primary structure comprises 157 residues: Universal stress protein Sll1654 (157 aa).

The protein belongs to the universal stress protein A family.

The protein is Universal stress protein Sll1654 of Synechocystis sp. (strain ATCC 27184 / PCC 6803 / Kazusa).